The following is a 1096-amino-acid chain: cAMP/cGMP-dependent 3',5'-cAMP/cGMP phosphodiesterase B (1096 aa).

The segment at 216 to 248 (SSSKMIINDSPRTQQRNGTTEQQKKQQQQQYLQ) is disordered. Polar residues predominate over residues 225–236 (SPRTQQRNGTTE). A divalent metal cation contacts are provided by His-573, His-575, and Asp-577. A nucleoside 3',5'-cyclic phosphate-binding positions include 783–930 (VFSK…DLSH) and 946–1070 (ITQH…EDNI).

This sequence belongs to the metallo-beta-lactamase superfamily. cNMP phosphodiesterase family. The cofactor is Mn(2+). It depends on Mg(2+) as a cofactor. Zn(2+) serves as cofactor.

The protein localises to the cytoplasm. The protein resides in the cytosol. The enzyme catalyses 3',5'-cyclic AMP + H2O = AMP + H(+). The catalysed reaction is 3',5'-cyclic GMP + H2O = GMP + H(+). Dual specificity cAMP and cGMP phosphodiesterase with marked preference for cyclic AMP, which is activated by cAMP and cGMP. Likely functions as a cAMP-stimulated cAMP-phosphodiesterase which may play a role in regulating the cAMP relay response. The protein is cAMP/cGMP-dependent 3',5'-cAMP/cGMP phosphodiesterase B (pdeE) of Dictyostelium discoideum (Social amoeba).